We begin with the raw amino-acid sequence, 436 residues long: Carboxypeptidase A5 (436 aa).

The signal sequence occupies residues Met-1–Gly-33. The propeptide at Gln-34–Arg-126 is activation peptide. The Peptidase M14 domain occupies Ser-138–Thr-431. Zn(2+) is bound by residues His-196 and Glu-199. Substrate is bound by residues His-196 to Glu-199, Arg-254, and Asn-271 to Arg-272. Cysteines 265 and 288 form a disulfide. Position 323 (His-323) interacts with Zn(2+). Substrate is bound by residues Ser-324 to Tyr-325 and Tyr-375. Residue Glu-397 is the Proton donor/acceptor of the active site.

It belongs to the peptidase M14 family. Requires Zn(2+) as cofactor.

The protein resides in the secreted. The polypeptide is Carboxypeptidase A5 (CPA5) (Macaca fascicularis (Crab-eating macaque)).